A 377-amino-acid polypeptide reads, in one-letter code: D-alanine--D-alanine ligase (377 aa).

An ATP-grasp domain is found at 140–349 (KELLTVNGIR…NAKLVDMLID (210 aa)). 170–225 (VAELGNIVFVKAANQGSSVGISRVTNAEEYTEALSDSFQYDYKVLIEEAVNGAREL) provides a ligand contact to ATP. The Mg(2+) site is built by D303, E316, and N318.

It belongs to the D-alanine--D-alanine ligase family. The cofactor is Mg(2+). It depends on Mn(2+) as a cofactor.

Its subcellular location is the cytoplasm. It catalyses the reaction 2 D-alanine + ATP = D-alanyl-D-alanine + ADP + phosphate + H(+). It participates in cell wall biogenesis; peptidoglycan biosynthesis. Its function is as follows. Cell wall formation. This is D-alanine--D-alanine ligase from Leuconostoc mesenteroides.